We begin with the raw amino-acid sequence, 1244 residues long: Ras-specific guanine nucleotide-releasing factor 1 (1244 aa).

One can recognise a PH 1 domain in the interval 22 to 129 (DGTRKGYLSK…WVAAIARASY (108 aa)). Residue S71 is modified to Phosphoserine; by PLK2. An IQ domain is found at 204 to 229 (KKIKKVQSFLRGWLCRRKWKNIIQDY). A DH domain is found at 240 to 426 (KRNQVVFSML…EELSRVMHDE (187 aa)). Positions 456-582 (TFVRQGSLIQ…WTSDIIQCVD (127 aa)) constitute a PH 2 domain. Phosphoserine; by PLK2 occurs at positions 575 and 611. The N-terminal Ras-GEF domain maps to 629-743 (KVLQIRYASV…RRRKLSLNIP (115 aa)). The tract at residues 707–730 (GDAPKSPRASRKFSSPPPLAIGTS) is disordered. S739 carries the post-translational modification Phosphoserine. A phosphoserine; by PLK2 mark is found at S760 and S781. The disordered stretch occupies residues 800-840 (TLEESSGFRKPTSDILKEESDDDQSDVDDTEVSPPTPKSFR). A compositionally biased stretch (acidic residues) spans 818 to 830 (ESDDDQSDVDDTE). At S854 the chain carries Phosphoserine; by PLK2. Positions 1009–1241 (SAMEIAEQLT…YEASLRIEPK (233 aa)) constitute a Ras-GEF domain.

In terms of assembly, homooligomer and heterooligomer with RASGRF2. Interacts with USP8, thereby regulating its stability. Phosphorylated by PLK2, leading to ubiquitination and degradation by the proteasome. Post-translationally, ubiquitinated and degraded following phosphorylation by PLK2. In terms of processing, phosphorylated by SRC and LCK. Phosphorylation by LCK increases its capacity to stimulate the GDP/GTP exchange on Ras, whereas its phosphorylation by SRC seems not to have an effect on stimulation activity.

Its function is as follows. Promotes the exchange of Ras-bound GDP by GTP. This chain is Ras-specific guanine nucleotide-releasing factor 1 (Rasgrf1), found in Rattus norvegicus (Rat).